A 513-amino-acid chain; its full sequence is Light-independent protochlorophyllide reductase subunit B (513 aa).

Asp-36 is a [4Fe-4S] cluster binding site. Catalysis depends on Asp-299, which acts as the Proton donor. 434–435 is a substrate binding site; sequence GM.

The protein belongs to the ChlB/BchB/BchZ family. In terms of assembly, protochlorophyllide reductase is composed of three subunits; ChlL, ChlN and ChlB. Forms a heterotetramer of two ChlB and two ChlN subunits. It depends on [4Fe-4S] cluster as a cofactor.

It is found in the plastid. It localises to the chloroplast. The catalysed reaction is chlorophyllide a + oxidized 2[4Fe-4S]-[ferredoxin] + 2 ADP + 2 phosphate = protochlorophyllide a + reduced 2[4Fe-4S]-[ferredoxin] + 2 ATP + 2 H2O. The protein operates within porphyrin-containing compound metabolism; chlorophyll biosynthesis (light-independent). Component of the dark-operative protochlorophyllide reductase (DPOR) that uses Mg-ATP and reduced ferredoxin to reduce ring D of protochlorophyllide (Pchlide) to form chlorophyllide a (Chlide). This reaction is light-independent. The NB-protein (ChlN-ChlB) is the catalytic component of the complex. The sequence is that of Light-independent protochlorophyllide reductase subunit B from Marchantia polymorpha (Common liverwort).